The sequence spans 679 residues: Protein hook (679 aa).

Residues 6 to 123 (NEMYYSLLEW…RLLQLVLGCA (118 aa)) enclose the Calponin-homology (CH) domain. Coiled coils occupy residues 135 to 437 (EIMC…LKCG) and 480 to 574 (QTAL…QEIL).

This sequence belongs to the hook family. In terms of assembly, homodimer. Interacts with microtubules via its N-terminus.

Its subcellular location is the cytoplasm. It is found in the cytoskeleton. It localises to the endosome. The protein resides in the synapse. Functionally, involved in endocytic trafficking by stabilizing organelles of the endocytic pathway. Probably acts as a cytoskeletal linker protein required to tether endosome vesicles to the cytoskeleton. Involved in modulation of endocytosis at stages required for down-regulation of membrane proteins that control synapse size. Not involved in synaptic vesicle recycling. Required in R7 cells for boss endocytosis into multivesicular bodies (MVBs). Has a role in regulating adult longevity. The polypeptide is Protein hook (Drosophila sechellia (Fruit fly)).